A 320-amino-acid chain; its full sequence is o-succinylbenzoate synthase (320 aa).

The active-site Proton donor is the lysine 133. Mg(2+) is bound by residues aspartate 161, glutamate 190, and aspartate 213. The active-site Proton acceptor is lysine 235.

The protein belongs to the mandelate racemase/muconate lactonizing enzyme family. MenC type 1 subfamily. Requires a divalent metal cation as cofactor.

It catalyses the reaction (1R,6R)-6-hydroxy-2-succinyl-cyclohexa-2,4-diene-1-carboxylate = 2-succinylbenzoate + H2O. It participates in quinol/quinone metabolism; 1,4-dihydroxy-2-naphthoate biosynthesis; 1,4-dihydroxy-2-naphthoate from chorismate: step 4/7. The protein operates within quinol/quinone metabolism; menaquinone biosynthesis. Converts 2-succinyl-6-hydroxy-2,4-cyclohexadiene-1-carboxylate (SHCHC) to 2-succinylbenzoate (OSB). This Citrobacter koseri (strain ATCC BAA-895 / CDC 4225-83 / SGSC4696) protein is o-succinylbenzoate synthase.